Consider the following 101-residue polypeptide: CYC02 protein (101 aa).

The stretch at 42–64 is one 1; approximate repeat; it reads DAVCHHGCCRWFHHRCVRCCRSA. Residues 42 to 101 form a 2 X approximate repeats region; that stretch reads DAVCHHGCCRWFHHRCVRCCRSAEEVSVSDTENNAAADAHCRHGCCRWFHGRCIRCCPSA. The stretch at 79-101 is one 2; approximate repeat; it reads DAHCRHGCCRWFHGRCIRCCPSA.

It belongs to the GRP family.

In terms of biological role, may be involved in the control of the cell cycle at the G1/S start transition. This Catharanthus roseus (Madagascar periwinkle) protein is CYC02 protein (CYC02).